A 1174-amino-acid polypeptide reads, in one-letter code: Probable pyruvate-flavodoxin oxidoreductase (1174 aa).

4Fe-4S ferredoxin-type domains lie at 680–709 (EIPI…AKVV) and 736–765 (YVLQ…NPEI). Positions 689, 692, 695, 699, 745, 748, 751, 755, 819, 822, 847, and 1071 each coordinate [4Fe-4S] cluster.

The protein belongs to the pyruvate:ferredoxin/flavodoxin oxidoreductase family. Requires [4Fe-4S] cluster as cofactor.

It catalyses the reaction oxidized [flavodoxin] + pyruvate + CoA + 2 H(+) = reduced [flavodoxin] + acetyl-CoA + CO2. In terms of biological role, oxidoreductase required for the transfer of electrons from pyruvate to flavodoxin. This Escherichia coli (strain K12) protein is Probable pyruvate-flavodoxin oxidoreductase (ydbK).